We begin with the raw amino-acid sequence, 329 residues long: Peroxidase 50 (329 aa).

A signal peptide spans 1 to 25 (MVVVNKTNLLLLLLSLCLTLDLSSA). 4 cysteine pairs are disulfide-bonded: C36–C119, C69–C74, C125–C325, and C204–C236. The active-site Proton acceptor is the H67. Ca(2+)-binding residues include D68, V71, G73, D75, and S77. Position 167 (P167) interacts with substrate. H197 lines the heme b pocket. T198 contacts Ca(2+). N215 carries N-linked (GlcNAc...) asparagine glycosylation. Ca(2+) is bound by residues D249, T252, and D257.

This sequence belongs to the peroxidase family. Classical plant (class III) peroxidase subfamily. Requires heme b as cofactor. It depends on Ca(2+) as a cofactor. As to expression, expressed in roots and leaves.

It is found in the secreted. The enzyme catalyses 2 a phenolic donor + H2O2 = 2 a phenolic radical donor + 2 H2O. Its function is as follows. Removal of H(2)O(2), oxidation of toxic reductants, biosynthesis and degradation of lignin, suberization, auxin catabolism, response to environmental stresses such as wounding, pathogen attack and oxidative stress. These functions might be dependent on each isozyme/isoform in each plant tissue. Functionally, exhibits a Ca(2+)-pectate binding affinity which could be interpreted in vivo as a specificity to interact with the pectic structure of the cell wall. This is Peroxidase 50 (PER50) from Arabidopsis thaliana (Mouse-ear cress).